We begin with the raw amino-acid sequence, 473 residues long: Cannabinoid receptor 1 (473 aa).

At M1 to Q117 the chain is on the extracellular side. Positions K2–V23 are required for mitochondrial localization. N-linked (GlcNAc...) asparagine glycans are attached at residues N78 and N84. The helical transmembrane segment at L118 to L143 threads the bilayer. Residues H144–H155 lie on the Cytoplasmic side of the membrane. A helical transmembrane segment spans residues F156–V176. Topologically, residues D177–N188 are extracellular. Residues V189–I213 traverse the membrane as a helical segment. The Cytoplasmic segment spans residues D214–K233. A helical transmembrane segment spans residues A234–W256. Residues N257 to E274 lie on the Extracellular side of the membrane. Residues T275–W300 traverse the membrane as a helical segment. The Cytoplasmic portion of the chain corresponds to K301–T345. The helical transmembrane segment at L346–Y366 threads the bilayer. Residues D367 to T378 lie on the Extracellular side of the membrane. A helical transmembrane segment spans residues V379–L400. Over R401–L473 the chain is Cytoplasmic. Residue C416 is the site of S-palmitoyl cysteine attachment. A phosphoserine mark is found at S426 and S430.

Belongs to the G-protein coupled receptor 1 family. As to quaternary structure, interacts (via C-terminus) with CNRIP1. Associates with G protein alpha subunits, including G(i) alpha-1/GNAI1, G(i) alpha-3/GNAI3 and G(o)-alpha/GNAO1; palmitoylation is important for interaction with GNAI3 and GNAO1. Palmitoylation at Cys-416 is important for recruitment at both plasma membrane and lipid rafts and association with G protein alpha subunits. As to expression, expressed in the brain, in the striatum, medial septum, descending arm of the band of Broca, the amygdaloid nucleus, the hippocampus and cortex (at protein level). High levels in the lateral striatum. In rostral brain regions, high expression levels in the dorsal lateral striatum, while in the caudal brain regions, high levels are observed in the ventral lateral striatum. Expressed in monocytes/macrophages (at protein level). Expressed in striated muscles and in vascular smooth muscles cells (at protein level).

It localises to the cell membrane. Its subcellular location is the mitochondrion outer membrane. It is found in the cell projection. The protein resides in the axon. The protein localises to the presynapse. Hemopressin, a peptide derived from hemoglobin subunit alpha (HBA1 and/or HBA2), acts as an antagonist peptide: hemopressin-binding efficiently blocks cannabinoid receptor CNR1 and subsequent signaling. In terms of biological role, G-protein coupled receptor for cannabinoids, including endocannabinoids (eCBs), such as N-arachidonoylethanolamide (also called anandamide or AEA) and 2-arachidonoylglycerol (2-AG). Mediates many cannabinoid-induced effects, acting, among others, on food intake, memory loss, gastrointestinal motility, catalepsy, ambulatory activity, anxiety, chronic pain. Signaling typically involves reduction in cyclic AMP. In the hypothalamus, may have a dual effect on mitochondrial respiration depending upon the agonist dose and possibly upon the cell type. Increases respiration at low doses, while decreases respiration at high doses. At high doses, CNR1 signal transduction involves G-protein alpha-i protein activation and subsequent inhibition of mitochondrial soluble adenylate cyclase, decrease in cyclic AMP concentration, inhibition of protein kinase A (PKA)-dependent phosphorylation of specific subunits of the mitochondrial electron transport system, including NDUFS2. In the hypothalamus, inhibits leptin-induced reactive oxygen species (ROS) formation and mediates cannabinoid-induced increase in SREBF1 and FASN gene expression. In response to cannabinoids, drives the release of orexigenic beta-endorphin, but not that of melanocyte-stimulating hormone alpha/alpha-MSH, from hypothalamic POMC neurons, hence promoting food intake. In the hippocampus, regulates cellular respiration and energy production in response to cannabinoids. Involved in cannabinoid-dependent depolarization-induced suppression of inhibition (DSI), a process in which depolarization of CA1 postsynaptic pyramidal neurons mobilizes eCBs, which retrogradely activate presynaptic CB1 receptors, transiently decreasing GABAergic inhibitory neurotransmission. Also reduces excitatory synaptic transmission. In superior cervical ganglions and cerebral vascular smooth muscle cells, inhibits voltage-gated Ca(2+) channels in a constitutive, as well as agonist-dependent manner. Induces leptin production in adipocytes and reduces LRP2-mediated leptin clearance in the kidney, hence participating in hyperleptinemia. In adipose tissue, CNR1 signaling leads to increased expression of SREBF1, ACACA and FASN genes. In the liver, activation by endocannabinoids leads to increased de novo lipogenesis and reduced fatty acid catabolism, associated with increased expression of SREBF1/SREBP-1, GCK, ACACA, ACACB and FASN genes. May also affect de novo cholesterol synthesis and HDL-cholesteryl ether uptake. Peripherally modulates energy metabolism. In high carbohydrate diet-induced obesity, may decrease the expression of mitochondrial dihydrolipoyl dehydrogenase/DLD in striated muscles, as well as that of selected glucose/ pyruvate metabolic enzymes, hence affecting energy expenditure through mitochondrial metabolism. In response to cannabinoid anandamide, elicits a pro-inflammatory response in macrophages, which involves NLRP3 inflammasome activation and IL1B and IL18 secretion. In macrophages infiltrating pancreatic islets, this process may participate in the progression of type-2 diabetes and associated loss of pancreatic beta-cells. The polypeptide is Cannabinoid receptor 1 (Cnr1) (Rattus norvegicus (Rat)).